The following is a 112-amino-acid chain: UPF0060 membrane protein XOO1694 (112 aa).

The next 4 membrane-spanning stretches (helical) occupy residues 8–28 (LLLF…PYLW), 32–52 (GGSV…VWLL), 62–82 (VYAA…LWWV), and 92–112 (LLGA…PRSA).

This sequence belongs to the UPF0060 family.

The protein localises to the cell inner membrane. The protein is UPF0060 membrane protein XOO1694 of Xanthomonas oryzae pv. oryzae (strain MAFF 311018).